An 87-amino-acid chain; its full sequence is Small ribosomal subunit protein uS15c (87 aa).

It belongs to the universal ribosomal protein uS15 family. As to quaternary structure, part of the 30S ribosomal subunit.

Its subcellular location is the plastid. The protein localises to the chloroplast. In Nymphaea alba (White water-lily), this protein is Small ribosomal subunit protein uS15c (rps15).